Reading from the N-terminus, the 701-residue chain is Mediator of RNA polymerase II transcription subunit 25 (701 aa).

Disordered regions lie at residues 277–388 (AAQK…GAQQ) and 580–617 (AAAT…NPGA). Over residues 286–306 (ANQQQKNRFGQISTPPFSQSP) the composition is skewed to polar residues. Composition is skewed to low complexity over residues 314 to 367 (PSLS…NNQQ) and 593 to 604 (APPNQVQGQAQA). Positions 621–625 (LRSLL) match the LXXLL motif motif. Residues 650 to 689 (APGGGAQMQPQWRQPHQGPLMVPTGPRGPVTQNPGMPSVS) form a disordered region. Residues 679-689 (VTQNPGMPSVS) show a composition bias toward polar residues.

This sequence belongs to the Mediator complex subunit 25 family. In terms of assembly, component of the Mediator complex.

The protein localises to the nucleus. Functionally, component of the Mediator complex, a coactivator involved in the regulated transcription of nearly all RNA polymerase II-dependent genes. Mediator functions as a bridge to convey information from gene-specific regulatory proteins to the basal RNA polymerase II transcription machinery. Mediator is recruited to promoters by direct interactions with regulatory proteins and serves as a scaffold for the assembly of a functional preinitiation complex with RNA polymerase II and the general transcription factors. This chain is Mediator of RNA polymerase II transcription subunit 25 (med25), found in Danio rerio (Zebrafish).